The sequence spans 417 residues: MDNHANEINKLSRELGLLSNYEFNMDELKNLSPLDSTSSSIYIGDNLTYLQGLSKTSPKTIDFCYIDPPYNTGNKIIYHDNRKSVSSDIFGLHNEWMSFLLPRLFHAHKMLKDTGIIAISIDDYEFAHLKILMDKIFGEDNFIGNIVVCRSKNGKGSKRNIASAHEYLLVYGKSDMAELSGQPDDKSLYDKVDCFGEYRIDGMFRKKGDSSLRTDRPNMFYPLYFNPSTGEVQVEPELGLKTVYPIDSKGIERRWLWSKETARERSWELFASKNGVVYVKNYSSSHKRIKVRTLWNDSSFYTERATNEITKIFGSKVFDTPKALNYIMSIINCMAKPDALILDFFAGSGTTAHAAAVLNSLDGGSRKTILMESNHPITKTHIAYKSGFRKISDITISRLNYVSDNFPDFKYKKIEII.

Belongs to the N(4)/N(6)-methyltransferase family.

The enzyme catalyses a 2'-deoxyadenosine in DNA + S-adenosyl-L-methionine = an N(6)-methyl-2'-deoxyadenosine in DNA + S-adenosyl-L-homocysteine + H(+). A beta subtype methylase, recognizes the double-stranded sequence 5'-GGTACC-3', methylates A-4 on both strands, and protects the DNA from cleavage by the KpnI endonuclease. This chain is Type II methyltransferase M.KpnI, found in Klebsiella pneumoniae.